We begin with the raw amino-acid sequence, 500 residues long: ATP synthase subunit beta (500 aa).

An ATP-binding site is contributed by 155 to 162 (GGAGVGKT).

The protein belongs to the ATPase alpha/beta chains family. F-type ATPases have 2 components, CF(1) - the catalytic core - and CF(0) - the membrane proton channel. CF(1) has five subunits: alpha(3), beta(3), gamma(1), delta(1), epsilon(1). CF(0) has three main subunits: a(1), b(2) and c(9-12). The alpha and beta chains form an alternating ring which encloses part of the gamma chain. CF(1) is attached to CF(0) by a central stalk formed by the gamma and epsilon chains, while a peripheral stalk is formed by the delta and b chains.

It is found in the cell inner membrane. The catalysed reaction is ATP + H2O + 4 H(+)(in) = ADP + phosphate + 5 H(+)(out). Produces ATP from ADP in the presence of a proton gradient across the membrane. The catalytic sites are hosted primarily by the beta subunits. The sequence is that of ATP synthase subunit beta from Azobacteroides pseudotrichonymphae genomovar. CFP2.